A 264-amino-acid polypeptide reads, in one-letter code: S-adenosylmethionine decarboxylase proenzyme (264 aa).

The active-site Schiff-base intermediate with substrate; via pyruvic acid is the Ser-112. Ser-112 carries the pyruvic acid (Ser); by autocatalysis modification. The active-site Proton acceptor; for processing activity is His-117. The active-site Proton donor; for catalytic activity is the Cys-140.

This sequence belongs to the prokaryotic AdoMetDC family. Type 2 subfamily. As to quaternary structure, heterooctamer of four alpha and four beta chains arranged as a tetramer of alpha/beta heterodimers. Pyruvate serves as cofactor. Post-translationally, is synthesized initially as an inactive proenzyme. Formation of the active enzyme involves a self-maturation process in which the active site pyruvoyl group is generated from an internal serine residue via an autocatalytic post-translational modification. Two non-identical subunits are generated from the proenzyme in this reaction, and the pyruvate is formed at the N-terminus of the alpha chain, which is derived from the carboxyl end of the proenzyme. The post-translation cleavage follows an unusual pathway, termed non-hydrolytic serinolysis, in which the side chain hydroxyl group of the serine supplies its oxygen atom to form the C-terminus of the beta chain, while the remainder of the serine residue undergoes an oxidative deamination to produce ammonia and the pyruvoyl group blocking the N-terminus of the alpha chain.

The enzyme catalyses S-adenosyl-L-methionine + H(+) = S-adenosyl 3-(methylsulfanyl)propylamine + CO2. The protein operates within amine and polyamine biosynthesis; S-adenosylmethioninamine biosynthesis; S-adenosylmethioninamine from S-adenosyl-L-methionine: step 1/1. In terms of biological role, catalyzes the decarboxylation of S-adenosylmethionine to S-adenosylmethioninamine (dcAdoMet), the propylamine donor required for the synthesis of the polyamines spermine and spermidine from the diamine putrescine. The protein is S-adenosylmethionine decarboxylase proenzyme of Salmonella gallinarum (strain 287/91 / NCTC 13346).